The following is a 40-amino-acid chain: Dolichyl-diphosphooligosaccharide--protein glycosyltransferase subunit 4 (40 aa).

The Lumenal portion of the chain corresponds to 1–4; sequence MITD. A helical membrane pass occupies residues 5 to 25; that stretch reads VQLAIFSNVLGVFLFLLVVAY. At 26-40 the chain is on the cytoplasmic side; that stretch reads HYINANTGKIGPKAK.

Belongs to the OST4 family. As to quaternary structure, component of the oligosaccharyltransferase (OST) complex.

It is found in the endoplasmic reticulum membrane. In terms of biological role, subunit of the oligosaccharyl transferase (OST) complex that catalyzes the initial transfer of a defined glycan (Glc(3)Man(9)GlcNAc(2) in eukaryotes) from the lipid carrier dolichol-pyrophosphate to an asparagine residue within an Asn-X-Ser/Thr consensus motif in nascent polypeptide chains, the first step in protein N-glycosylation. N-glycosylation occurs cotranslationally and the complex associates with the Sec61 complex at the channel-forming translocon complex that mediates protein translocation across the endoplasmic reticulum (ER). All subunits are required for a maximal enzyme activity. The protein is Dolichyl-diphosphooligosaccharide--protein glycosyltransferase subunit 4 of Drosophila willistoni (Fruit fly).